Consider the following 1150-residue polypeptide: Solute carrier family 12 member 6 (1150 aa).

The tract at residues 1 to 108 is disordered; sequence MHPPEATTKM…GEHSQLLDDG (108 aa). Topologically, residues 1 to 135 are cytoplasmic; that stretch reads MHPPEATTKM…DEYFDKNLAL (135 aa). Positions 28-45 are enriched in low complexity; that stretch reads LSDTSPDLSSRSSSRVRF. The residue at position 32 (Ser32) is a Phosphoserine. The span at 80–101 shows a compositional bias: polar residues; the sequence is DRTSNPQDVTEDPSQNSITGEH. Ser120 carries the post-translational modification Phosphoserine. A discontinuously helical transmembrane segment spans residues 136-158; sequence FEEEMDTRPKVSSLLNRMANYTN. K(+) contacts are provided by Ser147 and Ser148. A Phosphoserine modification is found at Ser148. Asn151 is a chloride binding site. The Extracellular portion of the chain corresponds to 159–165; it reads LTQGAKE. Positions 161-181 are disordered; the sequence is QGAKEHEEAENITEGKKKPTK. Positions 163–177 are enriched in basic and acidic residues; the sequence is AKEHEEAENITEGKK. A helical transmembrane segment spans residues 166–188; it reads HEEAENITEGKKKPTKSPQMGTF. The Cytoplasmic portion of the chain corresponds to 189-211; it reads MGVYLPCLQNIFGVILFLRLTWV. Residues 212 to 245 traverse the membrane as a helical segment; it reads VGTAGILQAFAIVLICCCCTMLTAISMSAIATNG. At 246–263 the chain is on the extracellular side; sequence VVPAGGSYFMISRALGPE. The next 2 membrane-spanning stretches (helical) occupy residues 264 to 287 and 288 to 316; these read FGGA…ILGA and IEIF…AMLN. A K(+)-binding site is contributed by Tyr283. Residues 317 to 433 lie on the Extracellular side of the membrane; sequence NMRVYGTAFL…FVHNNVISIQ (117 aa). Cys375 and Cys390 are disulfide-bonded. Asn379, Asn398, Asn411, and Asn417 each carry an N-linked (GlcNAc...) asparagine glycan. Cys410 and Cys420 form a disulfide bridge. Residues 434-454 form a helical membrane-spanning segment; it reads GIPGLASGIITENLWSNYLPK. The K(+) site is built by Ile443, Thr444, and Asn446. The chloride site is built by Ile443 and Thr444. Chloride is bound by residues Leu447 and Trp448. The Cytoplasmic segment spans residues 455-464; that stretch reads GEIIEKPSAK. Residues 465 to 487 traverse the membrane as a helical segment; it reads SSDVLGNLNHEYVLADITTSFTL. Topologically, residues 488-518 are extracellular; the sequence is LVGIFFPSVTGIMAGSNRSGDLKDAQKSIPI. Residue Thr497 participates in K(+) binding. Residues 519 to 545 traverse the membrane as a helical segment; that stretch reads GTILAILTTSFVYLSNVVLFGACIEGV. The Cytoplasmic segment spans residues 546 to 568; the sequence is VLRDKFGDAVKGNLVVGTLSWPS. 2 consecutive transmembrane segments (helical) span residues 569–589 and 590–612; these read PWVI…QSLT and GAPR…VFGH. Ile603 serves as a coordination point for chloride. At 613 to 629 the chain is on the cytoplasmic side; it reads SKANGEPTWALLLTAAI. A run of 2 helical transmembrane segments spans residues 630–649 and 650–665; these read AELG…LSMF and FLMC…ALQT. Residue Tyr654 participates in chloride binding. Residues 666–1150 lie on the Cytoplasmic side of the membrane; sequence LLRTPNWRPR…GGSEVITIYS (485 aa). The scissor helix stretch occupies residues 682 to 691; sequence ALSFMGMSIC. Ser736 carries the phosphoserine modification. Thr778 bears the Phosphothreonine mark. Position 981 is a phosphoserine (Ser981). Residue Thr991 is modified to Phosphothreonine. Residues Ser1023, Ser1029, and Ser1032 each carry the phosphoserine modification. The residue at position 1048 (Thr1048) is a Phosphothreonine. At Tyr1121 the chain carries Phosphotyrosine.

It belongs to the SLC12A transporter family. K/Cl co-transporter subfamily. As to quaternary structure, homodimer; adopts a domain-swap conformation at the scissor helices connecting the transmembrane domain and C-terminal domain. Heterodimer with K-Cl cotransporter SLC12A5. Interacts (via C-terminus) with CKB; the interaction may be required for potassium-chloride cotransport activity. Phosphorylated, phosphorylation regulates transporter activity. Phosphorylated at Thr-991 and Thr-1048 by OXSR1/OSR1 and STK39/SPAK downstream of WNK kinases (WNK1, WNK2, WNK3 or WNK4), inhibiting the potassium-chloride cotransport activity. Post-translationally, N-glycosylated. Expressed in hippocampus and corpus callosum (at protein level). Highly expressed throughout the brain and detected at lower levels in kidney. Highly expressed in highly myelinated white matter of the brain, but not in gray matter. Detected in the corpus callosum, in packed cell layers of the hippocampus and in Purkinje neurons within the cerebellum. Highly expressed in white matter in the spinal cord, but not in dorsal root ganglia or sciatic nerve. Colocalizes with the oligodendrocyte marker CNP. Expressed in hippocampus in CA1, and to a lesser extent CA3 pyramidal cells. Also expressed in cortex, mostly in large neurons and in the large cerebellar Purkinje cells. As to expression, highly expressed in kidney, but not detected in brain.

The protein resides in the cell membrane. It is found in the basolateral cell membrane. The enzyme catalyses K(+)(in) + chloride(in) = K(+)(out) + chloride(out). With respect to regulation, inhibited following phosphorylation by OXSR1/OSR1 and STK39/SPAK: phosphorylation takes place downstream of WNK kinases (WNK1, WNK2, WNK3 or WNK4) in response to hyperosmotic stress and subsequent cell shrinkage. Functionally, mediates electroneutral potassium-chloride cotransport when activated by cell swelling. May contribute to cell volume homeostasis in single cells. Mediates electroneutral potassium-chloride cotransport when activated by cell swelling. May contribute to cell volume homeostasis in single cells. This Mus musculus (Mouse) protein is Solute carrier family 12 member 6 (Slc12a6).